The following is a 94-amino-acid chain: Translation initiation factor 1A 2 (94 aa).

An S1-like domain is found at 6 to 80; that stretch reads GRRNLRMPSD…EKANIEWRYS (75 aa).

It belongs to the eIF-1A family.

Seems to be required for maximal rate of protein biosynthesis. Enhances ribosome dissociation into subunits and stabilizes the binding of the initiator Met-tRNA(I) to 40 S ribosomal subunits. This Haloquadratum walsbyi (strain DSM 16790 / HBSQ001) protein is Translation initiation factor 1A 2.